We begin with the raw amino-acid sequence, 309 residues long: Probable cell division protein WhiA (309 aa).

The H-T-H motif DNA-binding region spans S275–A309.

This sequence belongs to the WhiA family.

In terms of biological role, involved in cell division and chromosome segregation. The sequence is that of Probable cell division protein WhiA from Pediococcus pentosaceus (strain ATCC 25745 / CCUG 21536 / LMG 10740 / 183-1w).